The following is a 340-amino-acid chain: Deubiquitinase SseL (340 aa).

His223 is a catalytic residue. Cys285 acts as the Nucleophile in catalysis.

This sequence belongs to the peptidase C79 family.

The protein localises to the secreted. It is found in the host cytoplasm. Its function is as follows. Effector proteins function to alter host cell physiology and promote bacterial survival in host tissues. This protease targets the host cell ubiquitin pathway by acting as a deubiquitinase in infected host cells. Specifically hydrolyzes mono- and polyubiquitin substrates in vitro with a preference for 'Lys-63'-linked ubiquitin chains, suggesting that it interferes with a signaling pathway rather than inhibiting proteasomal-dependent degradation of its targets. Does not possess desumoylating activity. Is required for the Salmonella-induced delayed cytotoxicity in macrophages and full virulence. Is not required for intracellular bacterial replication. The chain is Deubiquitinase SseL (sseL) from Salmonella typhimurium (strain LT2 / SGSC1412 / ATCC 700720).